The following is a 136-amino-acid chain: UPF0310 protein SMU_442 (136 aa).

It belongs to the UPF0310 family.

The chain is UPF0310 protein SMU_442 from Streptococcus mutans serotype c (strain ATCC 700610 / UA159).